The sequence spans 239 residues: Small ribosomal subunit protein uS2c (239 aa).

It belongs to the universal ribosomal protein uS2 family.

It localises to the plastid. This is Small ribosomal subunit protein uS2c (rps2) from Aneura mirabilis (Parasitic liverwort).